A 254-amino-acid chain; its full sequence is Triosephosphate isomerase (254 aa).

Residue 10–12 (NWK) participates in substrate binding. H99 acts as the Electrophile in catalysis. E169 (proton acceptor) is an active-site residue. Substrate contacts are provided by residues G175, S215, and 236-237 (GG).

Belongs to the triosephosphate isomerase family. As to quaternary structure, homodimer.

It localises to the cytoplasm. It carries out the reaction D-glyceraldehyde 3-phosphate = dihydroxyacetone phosphate. The protein operates within carbohydrate biosynthesis; gluconeogenesis. It functions in the pathway carbohydrate degradation; glycolysis; D-glyceraldehyde 3-phosphate from glycerone phosphate: step 1/1. Its function is as follows. Involved in the gluconeogenesis. Catalyzes stereospecifically the conversion of dihydroxyacetone phosphate (DHAP) to D-glyceraldehyde-3-phosphate (G3P). The protein is Triosephosphate isomerase of Chlamydia abortus (strain DSM 27085 / S26/3) (Chlamydophila abortus).